Here is a 166-residue protein sequence, read N- to C-terminus: Small ribosomal subunit protein uS5 (166 aa).

An S5 DRBM domain is found at 11 to 74 (LQEKLIAVNR…EQAKRNLNKV (64 aa)).

Belongs to the universal ribosomal protein uS5 family. As to quaternary structure, part of the 30S ribosomal subunit. Contacts proteins S4 and S8.

With S4 and S12 plays an important role in translational accuracy. Its function is as follows. Located at the back of the 30S subunit body where it stabilizes the conformation of the head with respect to the body. This chain is Small ribosomal subunit protein uS5, found in Aeromonas hydrophila subsp. hydrophila (strain ATCC 7966 / DSM 30187 / BCRC 13018 / CCUG 14551 / JCM 1027 / KCTC 2358 / NCIMB 9240 / NCTC 8049).